Consider the following 316-residue polypeptide: Ribosomal RNA small subunit methyltransferase H (316 aa).

S-adenosyl-L-methionine is bound by residues 35-37, aspartate 55, phenylalanine 84, aspartate 105, and glutamine 112; that span reads SGH.

It belongs to the methyltransferase superfamily. RsmH family.

Its subcellular location is the cytoplasm. It carries out the reaction cytidine(1402) in 16S rRNA + S-adenosyl-L-methionine = N(4)-methylcytidine(1402) in 16S rRNA + S-adenosyl-L-homocysteine + H(+). In terms of biological role, specifically methylates the N4 position of cytidine in position 1402 (C1402) of 16S rRNA. This Streptococcus equi subsp. zooepidemicus (strain MGCS10565) protein is Ribosomal RNA small subunit methyltransferase H.